The primary structure comprises 261 residues: Type III pantothenate kinase (261 aa).

6–13 (DAGNTNVV) contributes to the ATP binding site. 108–111 (GADR) is a binding site for substrate. Asp110 serves as the catalytic Proton acceptor. Residue Asp130 participates in K(+) binding. Position 133 (Thr133) interacts with ATP. Residue Thr185 participates in substrate binding.

The protein belongs to the type III pantothenate kinase family. In terms of assembly, homodimer. NH4(+) is required as a cofactor. It depends on K(+) as a cofactor.

It is found in the cytoplasm. The catalysed reaction is (R)-pantothenate + ATP = (R)-4'-phosphopantothenate + ADP + H(+). The protein operates within cofactor biosynthesis; coenzyme A biosynthesis; CoA from (R)-pantothenate: step 1/5. Functionally, catalyzes the phosphorylation of pantothenate (Pan), the first step in CoA biosynthesis. This chain is Type III pantothenate kinase, found in Rhodospirillum centenum (strain ATCC 51521 / SW).